The primary structure comprises 315 residues: Methionyl-tRNA formyltransferase (315 aa).

113–116 (SLLP) contacts (6S)-5,6,7,8-tetrahydrofolate.

It belongs to the Fmt family.

It carries out the reaction L-methionyl-tRNA(fMet) + (6R)-10-formyltetrahydrofolate = N-formyl-L-methionyl-tRNA(fMet) + (6S)-5,6,7,8-tetrahydrofolate + H(+). In terms of biological role, attaches a formyl group to the free amino group of methionyl-tRNA(fMet). The formyl group appears to play a dual role in the initiator identity of N-formylmethionyl-tRNA by promoting its recognition by IF2 and preventing the misappropriation of this tRNA by the elongation apparatus. The polypeptide is Methionyl-tRNA formyltransferase (Klebsiella pneumoniae subsp. pneumoniae (strain ATCC 700721 / MGH 78578)).